Reading from the N-terminus, the 136-residue chain is Histone H3 (136 aa).

The tract at residues 1–43 is disordered; it reads MARTKQTARKSTGGKAPRKQLASKAARKAAPSTGGVKKPHRYK. Residue Lys-5 is modified to N6,N6,N6-trimethyllysine; alternate. N6,N6-dimethyllysine; alternate is present on Lys-5. N6-methyllysine; alternate occurs at positions 5 and 10. Lys-10 bears the N6-acetyllysine; alternate mark. Residue Ser-11 is modified to Phosphoserine. Lys-15 is modified (N6,N6-dimethyllysine; alternate). Lys-15, Lys-19, Lys-24, Lys-28, and Lys-37 each carry N6-acetyllysine; alternate. N6-methyllysine; alternate is present on residues Lys-19, Lys-24, Lys-28, and Lys-37. N6,N6,N6-trimethyllysine; alternate is present on residues Lys-28 and Lys-37. Residues Lys-28 and Lys-37 each carry the N6,N6-dimethyllysine; alternate modification. N6-acetyllysine is present on residues Lys-57 and Lys-65. Lys-80 carries the post-translational modification N6,N6,N6-trimethyllysine; alternate. The residue at position 80 (Lys-80) is an N6,N6-dimethyllysine; alternate. Residue Lys-80 is modified to N6-methyllysine; alternate.

This sequence belongs to the histone H3 family. In terms of assembly, the nucleosome is a histone octamer containing two molecules each of H2A, H2B, H3 and H4 assembled in one H3-H4 heterotetramer and two H2A-H2B heterodimers. The octamer wraps approximately 147 bp of DNA. Post-translationally, phosphorylated to form H3S10ph. H3S10ph promotes subsequent H3K14ac formation and is required for transcriptional activation through TBP recruitment to the promoters. Mono-, di- and trimethylated by the COMPASS complex to form H3K4me1/2/3. H3K4me activates gene expression by regulating transcription elongation and plays a role in telomere length maintenance. H3K4me enrichment correlates with transcription levels, and occurs in a 5' to 3' gradient with H3K4me3 enrichment at the 5'-end of genes, shifting to H3K4me2 and then H3K4me1. Methylated by set2 to form H3K36me. H3K36me represses gene expression. Methylated by dot1 to form H3K79me. H3K79me is required for association of SIR proteins with telomeric regions and for telomeric silencing. The COMPASS-mediated formation of H3K4me2/3 and the dot1-mediated formation of H3K79me require H2BK123ub1. In terms of processing, acetylation of histone H3 leads to transcriptional activation. H3K14ac formation by gcn5 is promoted by H3S10ph. H3K14ac can also be formed by esa1. H3K56ac formation occurs predominantly in newly synthesized H3 molecules during G1, S and G2/M of the cell cycle and may be involved in DNA repair.

It is found in the nucleus. It localises to the chromosome. Functionally, core component of nucleosome. Nucleosomes wrap and compact DNA into chromatin, limiting DNA accessibility to the cellular machineries which require DNA as a template. Histones thereby play a central role in transcription regulation, DNA repair, DNA replication and chromosomal stability. DNA accessibility is regulated via a complex set of post-translational modifications of histones, also called histone code, and nucleosome remodeling. The polypeptide is Histone H3 (hht1) (Neosartorya fischeri (strain ATCC 1020 / DSM 3700 / CBS 544.65 / FGSC A1164 / JCM 1740 / NRRL 181 / WB 181) (Aspergillus fischerianus)).